The following is a 184-amino-acid chain: Ribosome-recycling factor (184 aa).

It belongs to the RRF family.

It is found in the cytoplasm. Responsible for the release of ribosomes from messenger RNA at the termination of protein biosynthesis. May increase the efficiency of translation by recycling ribosomes from one round of translation to another. The sequence is that of Ribosome-recycling factor from Onion yellows phytoplasma (strain OY-M).